Here is a 25-residue protein sequence, read N- to C-terminus: Malate dehydrogenase (25 aa).

11-17 contacts NAD(+); that stretch reads GAAGNIG.

The protein belongs to the LDH/MDH superfamily. MDH type 2 family.

The catalysed reaction is (S)-malate + NAD(+) = oxaloacetate + NADH + H(+). Catalyzes the reversible oxidation of malate to oxaloacetate. This is Malate dehydrogenase (mdh) from Phenylobacterium immobile.